The primary structure comprises 320 residues: Malate dehydrogenase (320 aa).

NAD(+) contacts are provided by residues 10–15 (GSGMIG) and D34. Substrate is bound by residues R83 and R89. Residues N96 and 119-121 (ITN) each bind NAD(+). Residues N121 and R152 each coordinate substrate. H176 serves as the catalytic Proton acceptor.

The protein belongs to the LDH/MDH superfamily. MDH type 3 family.

The enzyme catalyses (S)-malate + NAD(+) = oxaloacetate + NADH + H(+). Catalyzes the reversible oxidation of malate to oxaloacetate. This chain is Malate dehydrogenase, found in Rhizobium rhizogenes (strain K84 / ATCC BAA-868) (Agrobacterium radiobacter).